The primary structure comprises 220 residues: Octanoyltransferase (220 aa).

The region spanning 31–211 (GTAADHLLLL…HFARIFDFEM (181 aa)) is the BPL/LPL catalytic domain. Substrate is bound by residues 76–83 (RGGDVTYH), 143–145 (AIG), and 156–158 (GFA). The Acyl-thioester intermediate role is filled by Cys-174.

The protein belongs to the LipB family.

The protein localises to the cytoplasm. The enzyme catalyses octanoyl-[ACP] + L-lysyl-[protein] = N(6)-octanoyl-L-lysyl-[protein] + holo-[ACP] + H(+). Its pathway is protein modification; protein lipoylation via endogenous pathway; protein N(6)-(lipoyl)lysine from octanoyl-[acyl-carrier-protein]: step 1/2. Its function is as follows. Catalyzes the transfer of endogenously produced octanoic acid from octanoyl-acyl-carrier-protein onto the lipoyl domains of lipoate-dependent enzymes. Lipoyl-ACP can also act as a substrate although octanoyl-ACP is likely to be the physiological substrate. The polypeptide is Octanoyltransferase (Solibacter usitatus (strain Ellin6076)).